We begin with the raw amino-acid sequence, 258 residues long: Neurotrophin-3 (258 aa).

The N-terminal stretch at 1 to 18 (MSILFYVIFLAYLRGIQG) is a signal peptide. A propeptide spanning residues 19-139 (NNMDQRSLPE…TNRTSPRRKR (121 aa)) is cleaved from the precursor. Residues 60–85 (QSTLPKAEAPREPEQGEATRSEFQPM) are disordered. A compositionally biased stretch (basic and acidic residues) spans 67-79 (EAPREPEQGEATR). A glycan (N-linked (GlcNAc...) asparagine) is linked at Asn-131. Disulfide bonds link Cys-153-Cys-218, Cys-196-Cys-247, and Cys-206-Cys-249.

Belongs to the NGF-beta family. As to expression, brain and peripheral tissues.

It is found in the secreted. Seems to promote the survival of visceral and proprioceptive sensory neurons. The sequence is that of Neurotrophin-3 (Ntf3) from Rattus norvegicus (Rat).